Here is a 514-residue protein sequence, read N- to C-terminus: Probable lysine--tRNA ligase, cytoplasmic (514 aa).

The protein belongs to the class-II aminoacyl-tRNA synthetase family. In terms of assembly, homodimer.

The protein localises to the cytoplasm. The catalysed reaction is tRNA(Lys) + L-lysine + ATP = L-lysyl-tRNA(Lys) + AMP + diphosphate. The polypeptide is Probable lysine--tRNA ligase, cytoplasmic (Vairimorpha ceranae (strain BRL01) (Microsporidian parasite)).